The primary structure comprises 430 residues: MGLFDKVKQFANSNNNNNDSGNNNQGDYVTKAENMIGEDRVNQFKSKIGEDRFDKMESKVRQQFSNTSINDNDSNNNDSYGSNNNDSYGSNNNDSYGSNNNDSYGSNNNDSYGSNNDDSYGSSNKKKSSYGSNNDDSYGSSNNNDSYGSNNNDSYGSNNNDSYGSNNDDSYGSSNKNKSSYGSNNDDSYGSNNDDSYGSSNKKKSSYGSSNNDSYGSNNDDSYGSNNNDSYGSNNDDSYGSSNKKKSSYGSNNDDSYGSSNNNDSYGSNNDDSYGSSNKNKSSYGSSSNDDSYGSSNNDDSYGSSNKKKSSYGSNNDDSYGSNNDDSYGSSNKKKSSYGSSNNDSYGSNNDDSYGSSNKKKSSYGSNNDDSYGSSNNNDSYGSNNDDSYGSSNRNKNSYGSSNYGSSNNDDSYGSSNRGGRNQYGGDDDY.

The disordered stretch occupies residues 1–430 (MGLFDKVKQF…RNQYGGDDDY (430 aa)). Over residues 12 to 27 (NSNNNNNDSGNNNQGD) the composition is skewed to low complexity. Positions 37-60 (GEDRVNQFKSKIGEDRFDKMESKV) are enriched in basic and acidic residues. The segment covering 70-421 (NDNDSNNNDS…SYGSSNRGGR (352 aa)) has biased composition (low complexity). 6 tandem repeats follow at residues 74–81 (SNNNDSYG), 82–89 (SNNNDSYG), 90–97 (SNNNDSYG), 98–105 (SNNNDSYG), 106–113 (SNNNDSYG), and 114–121 (SNNDDSYG). The 38 X 8 AA approximate tandem repeats of S-[NS]-N-[ND]-D-S-Y-G stretch occupies residues 74-414 (SNNNDSYGSN…GSSNNDDSYG (341 aa)). The 7; approximate repeat unit spans residues 124–131 (NKKKSSYG). A run of 5 repeats spans residues 132 to 139 (SNNDDSYG), 141 to 148 (SNNNDSYG), 149 to 156 (SNNNDSYG), 157 to 164 (SNNNDSYG), and 165 to 172 (SNNDDSYG). The 13; approximate repeat unit spans residues 175–182 (NKNKSSYG). A phosphoserine mark is found at serine 183 and serine 191. Tandem repeats lie at residues 183 to 190 (SNNDDSYG) and 191 to 198 (SNNDDSYG). The stretch at 201-208 (NKKKSSYG) is one 16; approximate repeat. 4 consecutive repeat copies span residues 209–216 (SSNNDSYG), 217–224 (SNNDDSYG), 225–232 (SNNNDSYG), and 233–240 (SNNDDSYG). The 21; approximate repeat unit spans residues 243-250 (NKKKSSYG). 3 consecutive repeat copies span residues 251–258 (SNNDDSYG), 260–267 (SNNNDSYG), and 268–275 (SNNDDSYG). Residues 278 to 285 (NKNKSSYG) form a 25; approximate repeat. Repeat copies occupy residues 287-294 (SSNDDSYG) and 296-303 (SNNDDSYG). Residues 306-313 (NKKKSSYG) form a 28; approximate repeat. Phosphoserine occurs at positions 314 and 322. 2 tandem repeats follow at residues 314-321 (SNNDDSYG) and 322-329 (SNNDDSYG). Residues 332–339 (NKKKSSYG) form a 31; approximate repeat. Tandem repeats lie at residues 340–347 (SSNNDSYG) and 348–355 (SNNDDSYG). The stretch at 358–365 (NKKKSSYG) is one 34; approximate repeat. Repeat copies occupy residues 366 to 373 (SNNDDSYG) and 375 to 382 (SNNNDSYG). A 37; approximate repeat occupies 393 to 400 (NRNKNSYG). The stretch at 407–414 (SNNDDSYG) is repeat 38.

The protein belongs to the DDR48 family. Post-translationally, probably highly glycosylated.

In terms of biological role, DNA damage-responsive protein that may be required for maintaining the rate of spontaneous mutagenesis. Shows low ATP and GTP hydrolysis activity. Dispensable for acquisition of thermotolerance and does not play a significant role in recovery or protection of cells from acute heat shock. The chain is Stress protein DDR48 (DDR48) from Saccharomyces cerevisiae (strain ATCC 204508 / S288c) (Baker's yeast).